The primary structure comprises 430 residues: Asparagine--tRNA ligase (430 aa).

It belongs to the class-II aminoacyl-tRNA synthetase family. As to quaternary structure, homodimer.

It is found in the cytoplasm. It catalyses the reaction tRNA(Asn) + L-asparagine + ATP = L-asparaginyl-tRNA(Asn) + AMP + diphosphate + H(+). The sequence is that of Asparagine--tRNA ligase from Staphylococcus haemolyticus (strain JCSC1435).